Reading from the N-terminus, the 512-residue chain is Lysine--tRNA ligase (512 aa).

Residues Glu421 and Glu428 each coordinate Mg(2+).

The protein belongs to the class-II aminoacyl-tRNA synthetase family. As to quaternary structure, homodimer. It depends on Mg(2+) as a cofactor.

Its subcellular location is the cytoplasm. The catalysed reaction is tRNA(Lys) + L-lysine + ATP = L-lysyl-tRNA(Lys) + AMP + diphosphate. In Aeromonas salmonicida (strain A449), this protein is Lysine--tRNA ligase.